The sequence spans 473 residues: Photosystem II CP43 reaction center protein (473 aa).

The propeptide occupies 1 to 14 (MKILYSLRRFYHVE). Thr-15 carries the N-acetylthreonine modification. Thr-15 is modified (phosphothreonine). 5 helical membrane-spanning segments follow: residues 69–93 (LFEV…PHLA), 134–155 (LLGP…QDRN), 178–200 (KALY…RKIT), 255–275 (KPFA…LSYS), and 291–312 (WFNN…ASQA). Glu-367 is a [CaMn4O5] cluster binding site. A helical transmembrane segment spans residues 447–471 (RARAAAAGFEKGIDRDLEPVVYMTP).

This sequence belongs to the PsbB/PsbC family. PsbC subfamily. In terms of assembly, PSII is composed of 1 copy each of membrane proteins PsbA, PsbB, PsbC, PsbD, PsbE, PsbF, PsbH, PsbI, PsbJ, PsbK, PsbL, PsbM, PsbT, PsbX, PsbY, PsbZ, Psb30/Ycf12, at least 3 peripheral proteins of the oxygen-evolving complex and a large number of cofactors. It forms dimeric complexes. It depends on Binds multiple chlorophylls and provides some of the ligands for the Ca-4Mn-5O cluster of the oxygen-evolving complex. It may also provide a ligand for a Cl- that is required for oxygen evolution. PSII binds additional chlorophylls, carotenoids and specific lipids. as a cofactor. Phosphorylated in both bundle sheath and mesophyll cells, phosphorylation increases when cells are grown under high rather than low light regimes (70 vs 900 umol photons/m-2/s).

The protein resides in the plastid. The protein localises to the chloroplast thylakoid membrane. Functionally, one of the components of the core complex of photosystem II (PSII). It binds chlorophyll and helps catalyze the primary light-induced photochemical processes of PSII. PSII is a light-driven water:plastoquinone oxidoreductase, using light energy to abstract electrons from H(2)O, generating O(2) and a proton gradient subsequently used for ATP formation. The sequence is that of Photosystem II CP43 reaction center protein from Zea mays (Maize).